Reading from the N-terminus, the 33-residue chain is Actin (33 aa).

This sequence belongs to the actin family.

The protein resides in the cytoplasm. The protein localises to the cytoskeleton. The enzyme catalyses ATP + H2O = ADP + phosphate + H(+). Functionally, actins are highly conserved proteins that are involved in various types of cell motility and are ubiquitously expressed in all eukaryotic cells. The sequence is that of Actin from Dictyocaulus viviparus (Bovine lungworm).